A 599-amino-acid polypeptide reads, in one-letter code: Sulfite reductase [NADPH] flavoprotein alpha-component (599 aa).

The region spanning 64–202 (ITIISASQTG…AASEWRARVV (139 aa)) is the Flavodoxin-like domain. Residues 70-75 (SQTGNA), 117-120 (STQG), and 153-162 (LGDSSYEFFC) each bind FMN. One can recognise an FAD-binding FR-type domain in the interval 234 to 448 (DAPLAASLSV…IEHNDNFRLP (215 aa)). FAD contacts are provided by residues threonine 322, alanine 356, 386–389 (RLYS), 404–406 (TVG), tyrosine 410, and 419–422 (GGAS). NADP(+) is bound by residues 519–520 (SR), 525–529 (KIYVQ), and aspartate 561. Tyrosine 599 contributes to the FAD binding site.

This sequence belongs to the NADPH-dependent sulphite reductase flavoprotein subunit CysJ family. In the N-terminal section; belongs to the flavodoxin family. It in the C-terminal section; belongs to the flavoprotein pyridine nucleotide cytochrome reductase family. As to quaternary structure, alpha(8)-beta(8). The alpha component is a flavoprotein, the beta component is a hemoprotein. Requires FAD as cofactor. FMN serves as cofactor.

The enzyme catalyses hydrogen sulfide + 3 NADP(+) + 3 H2O = sulfite + 3 NADPH + 4 H(+). It participates in sulfur metabolism; hydrogen sulfide biosynthesis; hydrogen sulfide from sulfite (NADPH route): step 1/1. Functionally, component of the sulfite reductase complex that catalyzes the 6-electron reduction of sulfite to sulfide. This is one of several activities required for the biosynthesis of L-cysteine from sulfate. The flavoprotein component catalyzes the electron flow from NADPH -&gt; FAD -&gt; FMN to the hemoprotein component. The chain is Sulfite reductase [NADPH] flavoprotein alpha-component from Escherichia coli O6:K15:H31 (strain 536 / UPEC).